The primary structure comprises 206 residues: Large ribosomal subunit protein uL4 (206 aa).

Residues 42 to 54 (RRQQGTHQSQGRS) are compositionally biased toward polar residues. The tract at residues 42–93 (RRQQGTHQSQGRSDVSRTGAKMFKQKGTGRARHSSARAPQFRGGGKAHGPVV) is disordered. Residues 64-76 (FKQKGTGRARHSS) are compositionally biased toward basic residues.

Belongs to the universal ribosomal protein uL4 family. In terms of assembly, part of the 50S ribosomal subunit.

In terms of biological role, one of the primary rRNA binding proteins, this protein initially binds near the 5'-end of the 23S rRNA. It is important during the early stages of 50S assembly. It makes multiple contacts with different domains of the 23S rRNA in the assembled 50S subunit and ribosome. Forms part of the polypeptide exit tunnel. This chain is Large ribosomal subunit protein uL4, found in Bartonella henselae (strain ATCC 49882 / DSM 28221 / CCUG 30454 / Houston 1) (Rochalimaea henselae).